A 218-amino-acid polypeptide reads, in one-letter code: MPHSQTSAPRDSLAGVRLARGASPWLLPTVATAAVSLLRARRSGTAKAVAVPATALAAGMLWFFRDPEREITQGRVVSPADGVVQSIMPWKDGRTRVAIFMSPLNVHVNRAPLAGTVTSVEHVPGGFVPAFNKESENNERVVWHFDTELGDIEMIQIAGAVARRIVPYVPQGTKVEQGERVGLIRFGSRVDLYLPEGVEVDVEVGQKTVAGVTRIDRD.

S188 (schiff-base intermediate with substrate; via pyruvic acid) is an active-site residue. A Pyruvic acid (Ser); by autocatalysis modification is found at S188.

This sequence belongs to the phosphatidylserine decarboxylase family. PSD-A subfamily. In terms of assembly, heterodimer of a large membrane-associated beta subunit and a small pyruvoyl-containing alpha subunit. Pyruvate is required as a cofactor. In terms of processing, is synthesized initially as an inactive proenzyme. Formation of the active enzyme involves a self-maturation process in which the active site pyruvoyl group is generated from an internal serine residue via an autocatalytic post-translational modification. Two non-identical subunits are generated from the proenzyme in this reaction, and the pyruvate is formed at the N-terminus of the alpha chain, which is derived from the carboxyl end of the proenzyme. The post-translation cleavage follows an unusual pathway, termed non-hydrolytic serinolysis, in which the side chain hydroxyl group of the serine supplies its oxygen atom to form the C-terminus of the beta chain, while the remainder of the serine residue undergoes an oxidative deamination to produce ammonia and the pyruvoyl prosthetic group on the alpha chain.

The protein localises to the cell membrane. The catalysed reaction is a 1,2-diacyl-sn-glycero-3-phospho-L-serine + H(+) = a 1,2-diacyl-sn-glycero-3-phosphoethanolamine + CO2. Its pathway is phospholipid metabolism; phosphatidylethanolamine biosynthesis; phosphatidylethanolamine from CDP-diacylglycerol: step 2/2. Catalyzes the formation of phosphatidylethanolamine (PtdEtn) from phosphatidylserine (PtdSer). This is Phosphatidylserine decarboxylase proenzyme from Streptomyces coelicolor (strain ATCC BAA-471 / A3(2) / M145).